The sequence spans 112 residues: Transcriptional regulator WhiD (112 aa).

The 65-residue stretch at 22–86 (ACRGVDSSLF…GGLTEDEREE (65 aa)) folds into the 4Fe-4S Wbl-type domain. [4Fe-4S] cluster-binding residues include C23, C53, C56, and C62.

Belongs to the WhiB family. As to quaternary structure, the 4Fe-4S form is a monomer; upon oxidation forms a disulfide-bonded homodimer. It depends on [4Fe-4S] cluster as a cofactor. Post-translationally, can be nitrosylated by NO, 8 NO react per cluster. These complexes are quite stable under anaerobic conditions, but degrade slowly aerobically. In terms of processing, upon Fe-S cluster removal intramolecular disulfide bonds are formed.

It localises to the cytoplasm. In terms of biological role, acts as a transcriptional regulator. Probably redox-responsive. The apo- but not holo-form probably binds DNA. Plays a positive role in prespore maturation and the initiation of sporulation septation. The sequence is that of Transcriptional regulator WhiD (whiD) from Streptomyces coelicolor (strain ATCC BAA-471 / A3(2) / M145).